We begin with the raw amino-acid sequence, 319 residues long: Lambda-crystallin (319 aa).

Ala-2 is modified (N-acetylalanine). Ser-3 is modified (phosphoserine). NAD(+) contacts are provided by residues Leu-16–Val-17, Asp-36, Glu-97, and Lys-102. The residue at position 111 (Ser-111) is a Phosphoserine.

It belongs to the 3-hydroxyacyl-CoA dehydrogenase family. Homodimer. As to expression, detected in eye lens, kidney, liver, heart, lung, brain and testis.

The protein localises to the cytoplasm. The enzyme catalyses L-gulonate + NAD(+) = 3-dehydro-L-gulonate + NADH + H(+). With respect to regulation, inhibited by malonate and by inorganic phosphate. Its function is as follows. Functions as a crystallin in the rabbit eye lens. Has high L-gulonate 3-dehydrogenase activity. It also exhibits low dehydrogenase activity toward L-3-hydroxybutyrate (HBA) and L-threonate. This Oryctolagus cuniculus (Rabbit) protein is Lambda-crystallin (CRYL1).